Reading from the N-terminus, the 415-residue chain is 3-isopropylmalate dehydratase large subunit (415 aa).

Residues Cys-295, Cys-353, and Cys-356 each coordinate [4Fe-4S] cluster.

It belongs to the aconitase/IPM isomerase family. LeuC type 2 subfamily. In terms of assembly, heterodimer of LeuC and LeuD. It depends on [4Fe-4S] cluster as a cofactor.

It carries out the reaction (2R,3S)-3-isopropylmalate = (2S)-2-isopropylmalate. It participates in amino-acid biosynthesis; L-leucine biosynthesis; L-leucine from 3-methyl-2-oxobutanoate: step 2/4. Its function is as follows. Catalyzes the isomerization between 2-isopropylmalate and 3-isopropylmalate, via the formation of 2-isopropylmaleate. This chain is 3-isopropylmalate dehydratase large subunit, found in Pyrobaculum aerophilum (strain ATCC 51768 / DSM 7523 / JCM 9630 / CIP 104966 / NBRC 100827 / IM2).